The following is a 103-amino-acid chain: Large ribosomal subunit protein bL21 (103 aa).

Belongs to the bacterial ribosomal protein bL21 family. In terms of assembly, part of the 50S ribosomal subunit. Contacts protein L20.

Its function is as follows. This protein binds to 23S rRNA in the presence of protein L20. The chain is Large ribosomal subunit protein bL21 from Mannheimia succiniciproducens (strain KCTC 0769BP / MBEL55E).